A 747-amino-acid chain; its full sequence is Kinesin-like protein KIF3B (747 aa).

Methionine 1 carries the post-translational modification N-acetylmethionine. Serine 2 is subject to N-acetylserine; in Kinesin-like protein KIF3B, N-terminally processed. The 332-residue stretch at 9-340 (SVRVVVRCRP…LRYANRAKNI (332 aa)) folds into the Kinesin motor domain. An ATP-binding site is contributed by 96–103 (GQTGTGKT). The stretch at 346–579 (VNEDPKDALL…EQTQNELTRE (234 aa)) forms a coiled coil. Disordered stretches follow at residues 374 to 412 (IGRR…DKDD) and 698 to 747 (IQVD…LVPK). The span at 393–411 (GEEEEEEGEEGEEDGDDKD) shows a compositional bias: acidic residues. The tract at residues 580–747 (LKLKHLIIEN…YPQSRGLVPK (168 aa)) is globular. Residues 701-710 (DASSFESTAS) show a composition bias toward polar residues. Residues 711-721 (RKPKARPKSGR) are compositionally biased toward basic residues. A compositionally biased stretch (low complexity) spans 722–735 (KSGSSSSSSGNPAS).

It belongs to the TRAFAC class myosin-kinesin ATPase superfamily. Kinesin family. Kinesin II subfamily. Heterodimer of KIF3A and KIF3B. KIF3A/KIF3B heterodimer interacts with KIFAP3 forming a heterotrimeric (KIF3A/KIF3B/KIFAP3) complex. Interacts with the SMC3 subunit of the cohesin complex. Interacts directly with IFT20. Interacts with FLCN.

It is found in the cytoplasm. The protein resides in the cytoskeleton. The protein localises to the cell projection. It localises to the cilium. Its subcellular location is the dendritic spine. In terms of biological role, microtubule-based molecular motor that transport intracellular cargos, such as vesicles, organelles and protein complexes. Uses ATP hydrolysis to generate force to bind and move along the microtubule. Plays a role in cilia formation. Involved in photoreceptor integrity and opsin trafficking in rod photoreceptors. Transports vesicles containing N-methyl-D-aspartate (NMDA) receptor subunit GRIN2A into neuronal dendrites. This is Kinesin-like protein KIF3B from Mus musculus (Mouse).